Reading from the N-terminus, the 239-residue chain is Large ribosomal subunit protein uL2 (239 aa).

The disordered stretch occupies residues 202–239 (HGGGSHQHVGRPSTVARNTPPGRKVGHIAARRTGRRKG). Residues 225-239 (KVGHIAARRTGRRKG) show a composition bias toward basic residues.

The protein belongs to the universal ribosomal protein uL2 family. In terms of assembly, part of the 50S ribosomal subunit. Forms a bridge to the 30S subunit in the 70S ribosome.

In terms of biological role, one of the primary rRNA binding proteins. Required for association of the 30S and 50S subunits to form the 70S ribosome, for tRNA binding and peptide bond formation. It has been suggested to have peptidyltransferase activity; this is somewhat controversial. Makes several contacts with the 16S rRNA in the 70S ribosome. In Desulfurococcus amylolyticus (strain DSM 18924 / JCM 16383 / VKM B-2413 / 1221n) (Desulfurococcus kamchatkensis), this protein is Large ribosomal subunit protein uL2.